Consider the following 327-residue polypeptide: Probable cytosolic iron-sulfur protein assembly protein CIAO1 homolog (327 aa).

7 WD repeats span residues 3-42, 48-87, 92-131, 137-176, 181-220, 239-278, and 290-327; these read GHED…WICK, GHQR…FECN, GHEN…EYEC, SHTQ…WSCC, GHES…NQEG, YHDR…DRNQ, and AHSM…PAEE.

The protein belongs to the WD repeat CIA1 family.

Functionally, essential component of the cytosolic iron-sulfur (Fe/S) protein assembly machinery. Required for the maturation of extramitochondrial Fe/S proteins. This is Probable cytosolic iron-sulfur protein assembly protein CIAO1 homolog from Nematostella vectensis (Starlet sea anemone).